A 472-amino-acid chain; its full sequence is Argininosuccinate lyase (472 aa).

Belongs to the lyase 1 family. Argininosuccinate lyase subfamily.

The protein resides in the cytoplasm. The catalysed reaction is 2-(N(omega)-L-arginino)succinate = fumarate + L-arginine. It participates in amino-acid biosynthesis; L-arginine biosynthesis; L-arginine from L-ornithine and carbamoyl phosphate: step 3/3. The protein is Argininosuccinate lyase of Maricaulis maris (strain MCS10) (Caulobacter maris).